The primary structure comprises 132 residues: UPF0201 protein MTH_433 (132 aa).

This sequence belongs to the UPF0201 family.

In Methanothermobacter thermautotrophicus (strain ATCC 29096 / DSM 1053 / JCM 10044 / NBRC 100330 / Delta H) (Methanobacterium thermoautotrophicum), this protein is UPF0201 protein MTH_433.